A 221-amino-acid polypeptide reads, in one-letter code: uncharacterized protein (221 aa).

Composition is skewed to low complexity over residues Met-1–Asn-27 and Thr-140–Ser-162. Disordered stretches follow at residues Met-1–Glu-28 and Thr-140–Gly-205.

This is an uncharacterized protein from Dictyostelium discoideum (Social amoeba).